A 374-amino-acid chain; its full sequence is Translocating chain-associated membrane protein 1 (374 aa).

Residues 1-29 (MAIRKKSTKSPPVLSHEFVLQNHADIVSC) lie on the Cytoplasmic side of the membrane. Residues 30 to 50 (VAMVFLLGLMFEITAKASIIF) traverse the membrane as a helical segment. Over 51 to 76 (VTLQYNVTLPATEEQATESVSLYYYG) the chain is Lumenal. N-linked (GlcNAc...) asparagine glycosylation is present at Asn56. The helical transmembrane segment at 77–97 (IKDLATVFFYMLVAIIIHAVI) threads the bilayer. Residues 98–121 (QEYMLDKINRRMHFSKTKHSKFNE) are Cytoplasmic-facing. In terms of domain architecture, TLC spans 117–326 (SKFNESGQLS…NFQLRRWREH (210 aa)). Residues 122-142 (SGQLSAFYLFACVWGTFILIS) form a helical membrane-spanning segment. Over 143–159 (ENYISDPTILWRAYPHN) the chain is Lumenal. Residues 160–180 (LMTFQMKFFYISQLAYWLHAF) traverse the membrane as a helical segment. Over 181–192 (PELYFQKTKKED) the chain is Cytoplasmic. A helical membrane pass occupies residues 193–213 (IPRQLVYIGLYLFHIAGAYLL). Residues 214–217 (NLNH) are Lumenal-facing. The chain crosses the membrane as a helical span at residues 218–238 (LGLVLLVLHYFVEFLFHISRL). Over 239-251 (FYFSNEKYQKGFS) the chain is Cytoplasmic. The chain crosses the membrane as a helical span at residues 252–272 (LWAVLFVLGRLLTLILSVLTV). Residues 273 to 297 (GFGLARAENQKLDFSTGNFNVLAVR) are Lumenal-facing. A helical membrane pass occupies residues 298–318 (IAVLASICVTQAFMMWKFINF). The Cytoplasmic segment spans residues 319–374 (QLRRWREHSAFQAPAVKKKPTVTKGRSSKKGTENGVNGTLTSNVADSPRNKKEKSS). The segment covering 334–347 (VKKKPTVTKGRSSK) has biased composition (basic residues). Residues 334–374 (VKKKPTVTKGRSSKKGTENGVNGTLTSNVADSPRNKKEKSS) are disordered. A compositionally biased stretch (polar residues) spans 352 to 363 (NGVNGTLTSNVA). Ser365 is modified (phosphoserine).

It belongs to the TRAM family. As to quaternary structure, interacts with SEC61B. May interact with Derlin-1/DERL1. In terms of assembly, (Microbial infection) Interacts with human cytomegalovirus/HHV-5 proteins US2 and US11. In terms of processing, N-glycosylated.

It is found in the endoplasmic reticulum membrane. Its function is as follows. Involved in the translocation of nascent protein chains into or through the endoplasmic reticulum (ER) membrane by facilitating the proper chain positioning at the SEC61 channel. Regulates the exposure of nascent secretory protein chain to the cytosol during translocation into the ER. May affect the phospholipid bilayer in the vicinity of the lateral gate of the SEC61 channel, thereby facilitating ER protein transport. Intimately associates with transmembrane (TM) domain of nascent membrane proteins during the entire integration process into the ER membrane. Associates with the second TM domain of G-protein-coupled receptor opsin/OPSD nascent chain in the ER membrane, which may facilitate its integration into the membrane. Under conditions of ER stress, participates in the disposal of misfolded ER membrane proteins during the unfolded protein response (UPR), an integrated stress response (ISR) pathway, by selectively retrotranslocating misfolded ER-membrane proteins from the ER into the cytosol where they are ubiquitinated and degraded by the proteasome. In terms of biological role, (Microbial infection) In case of cytomegalovirus infection, participates in US2- and US11-mediated ER-to-cytosol retrotranslocation and subsequent degradation of major histocompatibility complex (MHC) class I heavy chains, thereby decreasing the immune detection by cytotoxic T-cells. This Homo sapiens (Human) protein is Translocating chain-associated membrane protein 1.